The following is a 315-amino-acid chain: L-lactate dehydrogenase (315 aa).

NAD(+)-binding residues include V14, D35, and Y66. Residues Q83, R89, and 121-124 (NPVD) each bind substrate. Residues 119-121 (VAN) and S144 contribute to the NAD(+) site. Position 149–152 (149–152 (DTAR)) interacts with substrate. H176 serves as the catalytic Proton acceptor. Residue Y221 is modified to Phosphotyrosine. Substrate is bound at residue T230.

Belongs to the LDH/MDH superfamily. LDH family. In terms of assembly, homotetramer.

The protein localises to the cytoplasm. The catalysed reaction is (S)-lactate + NAD(+) = pyruvate + NADH + H(+). Its pathway is fermentation; pyruvate fermentation to lactate; (S)-lactate from pyruvate: step 1/1. Catalyzes the conversion of lactate to pyruvate. The sequence is that of L-lactate dehydrogenase from Mesomycoplasma hyopneumoniae (strain 232) (Mycoplasma hyopneumoniae).